The primary structure comprises 293 residues: Protease HtpX homolog (293 aa).

Transmembrane regions (helical) follow at residues 4 to 24 (VILF…TLRI) and 40 to 60 (ALLM…LLIS). His-146 contributes to the Zn(2+) binding site. The active site involves Glu-147. His-150 provides a ligand contact to Zn(2+). 2 consecutive transmembrane segments (helical) span residues 161-181 (LIQG…GYFV) and 198-218 (VTVI…VAWF). A Zn(2+)-binding site is contributed by Glu-223.

Belongs to the peptidase M48B family. Zn(2+) serves as cofactor.

Its subcellular location is the cell inner membrane. The chain is Protease HtpX homolog from Bordetella avium (strain 197N).